The primary structure comprises 194 residues: ATP-dependent Clp protease proteolytic subunit 4 (194 aa).

S100 (nucleophile) is an active-site residue. H125 is an active-site residue.

The protein belongs to the peptidase S14 family. In terms of assembly, fourteen ClpP subunits assemble into 2 heptameric rings which stack back to back to give a disk-like structure with a central cavity, resembling the structure of eukaryotic proteasomes.

The protein resides in the cytoplasm. It catalyses the reaction Hydrolysis of proteins to small peptides in the presence of ATP and magnesium. alpha-casein is the usual test substrate. In the absence of ATP, only oligopeptides shorter than five residues are hydrolyzed (such as succinyl-Leu-Tyr-|-NHMec, and Leu-Tyr-Leu-|-Tyr-Trp, in which cleavage of the -Tyr-|-Leu- and -Tyr-|-Trp bonds also occurs).. Cleaves peptides in various proteins in a process that requires ATP hydrolysis. Has a chymotrypsin-like activity. Plays a major role in the degradation of misfolded proteins. The polypeptide is ATP-dependent Clp protease proteolytic subunit 4 (Rhodococcus jostii (strain RHA1)).